Here is a 3469-residue protein sequence, read N- to C-terminus: Abnormal spindle-like microcephaly-associated protein homolog (3469 aa).

The tract at residues methionine 1 to alanine 24 is disordered. Residues serine 13–alanine 24 show a composition bias toward low complexity. Serine 273, serine 276, serine 361, serine 386, serine 420, and serine 599 each carry phosphoserine. One can recognise a Calponin-homology (CH) 1 domain in the interval lysine 913–glutamine 1049. Residues valine 1050–threonine 1069 are a coiled coil. Residue serine 1095 is modified to Phosphoserine. In terms of domain architecture, Calponin-homology (CH) 2 spans serine 1102–leucine 1253. 38 IQ domains span residues glutamate 1258–alanine 1287, glutamine 1339–glutamine 1370, tyrosine 1385–serine 1414, lysine 1529–serine 1560, leucine 1574–glutamine 1605, threonine 1624–lysine 1653, isoleucine 1647–lysine 1676, methionine 1720–serine 1749, glutamine 1743–glutamine 1774, valine 1793–lysine 1822, glutamine 1816–lysine 1845, threonine 1866–arginine 1895, glutamate 1889–glutamine 1920, leucine 1939–glutamine 1970, glutamine 1962–glutamine 1993, threonine 2012–threonine 2041, cysteine 2035–glutamine 2066, leucine 2085–glutamine 2116, leucine 2108–glutamine 2139, isoleucine 2158–glutamine 2189, methionine 2181–threonine 2210, leucine 2231–glutamine 2262, valine 2304–alanine 2333, valine 2327–glutamine 2358, glutamine 2377–glutamine 2408, methionine 2400–glutamine 2431, leucine 2450–glutamine 2481, glutamine 2523–glutamine 2554, arginine 2681–glutamine 2712, valine 2731–serine 2762, glutamine 2851–glutamine 2882, isoleucine 2901–lysine 2930, isoleucine 2924–alanine 2955, glutamine 2946–glutamine 2977, arginine 3021–threonine 3050, leucine 3071–histidine 3102, glutamine 3173–arginine 3202, and phenylalanine 3196–serine 3227.

The protein localises to the cytoplasm. It localises to the cytoskeleton. Its subcellular location is the spindle. It is found in the nucleus. In terms of biological role, probable role in mitotic spindle regulation and coordination of mitotic processes. May have a preferential role in regulating neurogenesis. This is Abnormal spindle-like microcephaly-associated protein homolog (ASPM) from Canis lupus familiaris (Dog).